The primary structure comprises 415 residues: Alpha-2Db adrenergic receptor (415 aa).

Over 1–33 (MDLSTITFLLPNSSEDTNGTSAPRLPPHSQCAS) the chain is Extracellular. 2 N-linked (GlcNAc...) asparagine glycosylation sites follow: N12 and N18. Residues 34–58 (VLIVLVVTVIILVTIVGNVLVVVAV) traverse the membrane as a helical segment. Over 59-70 (FTSRALRAPQNL) the chain is Cytoplasmic. A helical membrane pass occupies residues 71 to 96 (FLVSLAAADILVATLVIPFSLANEVM). Over 97–106 (GYWYLGSTWC) the chain is Extracellular. C106 and C179 form a disulfide bridge. Residues 107-129 (AFYLALDVLFCTSSIVHLCAISL) traverse the membrane as a helical segment. The Cytoplasmic portion of the chain corresponds to 130 to 150 (DRYWSVTKAVSYNLKRTPRRI). Residues 151-173 (KIMITVVWVISAVISFPPLLMTK) form a helical membrane-spanning segment. Residues 174-184 (HDELECLLNNE) are Extracellular-facing. N-linked (GlcNAc...) asparagine glycosylation occurs at N183. The helical transmembrane segment at 185-208 (TWYILSSCIVSFFAPGLIMILVYC) threads the bilayer. Over 209-339 (RIYRVAKQRA…QMREKRFTFV (131 aa)) the chain is Cytoplasmic. The disordered stretch occupies residues 234-299 (QSETCFVRKG…EGAQSCPKPN (66 aa)). The span at 276–286 (NRHRNSRFAKS) shows a compositional bias: basic residues. The chain crosses the membrane as a helical span at residues 340–363 (LAVVMGVFVLCWFPFFFTYSLHAI). Residues 364–376 (CRKSCTIPDSLFN) are Extracellular-facing. A helical membrane pass occupies residues 377–397 (LFFWIGYCNSSVNPIIYTIFN). Residues 398–415 (RDFRKAFKKIMCRHSTRT) are Cytoplasmic-facing.

This sequence belongs to the G-protein coupled receptor 1 family. Adrenergic receptor subfamily. ADRA2D sub-subfamily.

Its subcellular location is the cell membrane. Functionally, alpha-2 adrenergic receptors mediate the catecholamine-induced inhibition of adenylate cyclase through the action of G proteins. The order of potency for this receptor is dexmedetomidine &gt; norepinephrine = epinephrine &gt; oxymetazoline. The polypeptide is Alpha-2Db adrenergic receptor (adra2db) (Danio rerio (Zebrafish)).